Consider the following 219-residue polypeptide: Aspartic protease inhibitor 10 (219 aa).

An N-terminal signal peptide occupies residues 1 to 23; the sequence is MMKCLFLLCLCLVPIVVFSSTFT. The propeptide occupies 24–32; that stretch reads SQNLIDLPS. Positions 26-31 match the Vacuolar targeting signal motif; that stretch reads NLIDLP. Asparagine 51 carries an N-linked (GlcNAc...) asparagine glycan. 2 disulfide bridges follow: cysteine 80–cysteine 125 and cysteine 173–cysteine 184.

This sequence belongs to the protease inhibitor I3 (leguminous Kunitz-type inhibitor) family. In terms of tissue distribution, in tubers and green buds of untreated plants. After abscisic acid treatment or mechanical wounding is mostly accumulated in leaves, to a lesser extent in stems, but not in roots.

Functionally, inhibitor of cathepsin D (aspartic protease) and trypsin (serine protease). Protects the plant by inhibiting proteases of invading organisms. This chain is Aspartic protease inhibitor 10 (CDI), found in Solanum tuberosum (Potato).